We begin with the raw amino-acid sequence, 2622 residues long: Ankyrin-3 (2622 aa).

The segment at 1–44 is disordered; that stretch reads MAHAASQLKKNRDLEINAEEETEKKKKHRKRSRDRKKKSDANAS. The span at 25–38 shows a compositional bias: basic residues; that stretch reads KKKHRKRSRDRKKK. Ser39 bears the Phosphoserine mark. 23 ANK repeats span residues 73–102, 106–135, 139–168, 172–201, 203–230, 242–271, 275–304, 308–337, 341–370, 374–403, 407–436, 440–469, 473–502, 506–535, 539–568, 572–601, 605–634, 638–667, 671–700, 704–733, 737–766, 770–799, and 803–832; these read NGLN…NVDA, KGNT…NVNA, NGFT…SQSL, DGFT…KGKV, LPAL…NADI, SGFT…AVDF, NDIT…KIDA, DGLT…PILS, NGLS…PVDD, DYLT…NPNA, NGFT…SIQA, SGLT…SPNT, RGET…QVEA, DDQT…SPNA, SGYT…SLSI, KGFT…SPDA, SGLT…SPHA, NGYT…DANA, QGIA…NVNL, SGLT…HVDA, MGYT…KVNA, NGYT…SPNE, and NGNT…EIMT. Phosphoserine is present on Ser631. Phosphoserine occurs at positions 851, 855, 869, 875, 921, 924, 930, 965, 967, and 1121. The disordered stretch occupies residues 868–889; that stretch reads LSDGEYISDGEEGEDAITGDTD. Over residues 873–884 the composition is skewed to acidic residues; the sequence is YISDGEEGEDAI. ZU5 domains lie at 992-1147 and 1149-1296; these read FLVS…VVSR and KQES…LADC. Phosphoserine is present on residues Ser1458 and Ser1469. Residues 1510-1539 are disordered; that stretch reads TPITVPGPAKSGSLSSSPSNTPSASPLKSI. The span at 1515-1536 shows a compositional bias: low complexity; the sequence is PGPAKSGSLSSSPSNTPSASPL. Phosphoserine occurs at positions 1621, 1624, 1679, 1984, 2102, 2114, and 2117. Disordered stretches follow at residues 1968 to 1992, 2099 to 2147, and 2292 to 2312; these read VESK…WTEF, ILES…FHEV, and SPDV…KDNQ. Positions 1977–1986 are enriched in basic and acidic residues; it reads PKSDKGHSPE. A compositionally biased stretch (basic and acidic residues) spans 2106 to 2127; the sequence is FSQHDQDKSPLSDSGFETRSEK. Polar residues predominate over residues 2128–2137; it reads TPSAPQSAES. A Death domain is found at 2336 to 2420; the sequence is TDIRMAIVAD…DIVTLLEGPI (85 aa). Phosphoserine occurs at positions 2457, 2475, and 2544. A disordered region spans residues 2568 to 2622; the sequence is CVPVGMKKMTRTPADGKARLNLQEEEGSARSEPKQGEGYKVKTKKEIRNVEKKAH. Over residues 2594 to 2622 the composition is skewed to basic and acidic residues; the sequence is GSARSEPKQGEGYKVKTKKEIRNVEKKAH.

As to quaternary structure, may be a constituent of a NFASC/NRCAM/ankyrin G complex. Interacts with RHBG. Directly interacts with DMD and betaDAG1; this interaction does not interfere with DMD-binding and is required for DMD and betaDAG1 retention at costameres. Interacts (via N-terminal ANK repeats) with SCHIP1 isoform 7 (via C-terminus); this interaction is required for the localization at axon initial segments (AISs) and nodes of Ranvier (NRs). Interacts with PLEC and FLNC. Interacts (via ANK repeats) with IQCJ-SCHIP1; required for IQCJ-SCHIP1 localization at axon initial segments (AIS) and nodes of Ranvier. Interacts with SCHIP1. Interacts with KCNA1; this inhibits channel activity. Interacts with SCN5A. Interacts with PKP2 and GJA1/CX43. In terms of assembly, interacts (via its C-terminal muscle-specific Obscurin/Titin-Binding-related domain sequence) with PLEC and FLNC. In terms of tissue distribution, expressed in the heart (at protein level). Expressed in skeletal muscle (at protein level). Expressed at highest levels in brain and testis, followed by skin, kidney, liver and spleen. As to expression, may be specifically expressed in muscle tissues, including heart and skeletal muscle (extensor digitorum longus) (at protein level). Expressed in skeletal muscle, brain, lung, heart, testes and kidney.

It localises to the cytoplasm. The protein resides in the cytoskeleton. It is found in the cell projection. Its subcellular location is the axon. The protein localises to the cell membrane. It localises to the sarcolemma. The protein resides in the postsynaptic cell membrane. It is found in the lysosome. Its subcellular location is the T-tubule. Its function is as follows. Membrane-cytoskeleton linker. May participate in the maintenance/targeting of ion channels and cell adhesion molecules at the nodes of Ranvier and axonal initial segments. In skeletal muscle, required for costamere localization of DMD and betaDAG1. Regulates KCNA1 channel activity in function of dietary Mg(2+) levels, and thereby contributes to the regulation of renal Mg(2+) reabsorption. Required for intracellular adhesion and junctional conductance in myocytes, potentially via stabilization of GJA1/CX43 protein abundance and promotion of PKP2, GJA1/CX43, and SCN5A/Nav1.5 localization to cell-cell junctions. This is Ankyrin-3 (Ank3) from Rattus norvegicus (Rat).